Consider the following 1459-residue polypeptide: DNA-binding protein RFX7 (1459 aa).

A disordered region spans residues 1–27; sequence MAEEQQQPPPQQLDAPQQLPLSAPNPG. Residues 12 to 21 show a composition bias toward low complexity; it reads QLDAPQQLPL. Residues 108-183 constitute a DNA-binding region (RFX-type winged-helix); sequence AFSWIRNTLE…YCYSGLRKKA (76 aa). A PxLPxI/L motif; mediates interaction with ANKRA2 and RFXANK motif is present at residues 188–193; it reads PTLPNL. 6 disordered regions span residues 303–347, 404–428, 482–590, 634–659, 688–716, and 918–1016; these read AKQQ…LPNG, SVKQ…ARHR, PSNS…GVTE, FTST…SPRK, GQKP…AQIP, and SVTP…VPPS. Polar residues-rich tracts occupy residues 404–416 and 482–502; these read SVKQ…QNVP and PSNS…TGTT. A compositionally biased stretch (low complexity) spans 521–534; that stretch reads SPGSRASSTGGTSA. Over residues 537-549 the composition is skewed to basic and acidic residues; the sequence is VKMEPEGSSDEHP. 3 stretches are compositionally biased toward polar residues: residues 562–578, 634–645, and 706–716; these read PLTT…NTDG, FTSTSSPSNGDS, and TESSTAGAQIP. A compositionally biased stretch (pro residues) spans 947–963; that stretch reads TPTPTPTPTPTPTPTPT. The segment covering 971 to 1009 has biased composition (polar residues); sequence GSQSLSRESPCSRLAQTTPVDSALGSSRHTPIGTPHSNC.

This sequence belongs to the RFX family. In terms of assembly, interacts (via PxLPxI/L motif) with RFXANK (via ankyrin repeats). Interacts (via PxLPxI/L motif) with ANKRA2 (via ankyrin repeats). As to expression, expressed in spleen and lymph node and to a lower extend in brain (at protein level). Expressed in lymphoid organs and lymphoid cell subsets. Expressed throughout natural killer (NK) cell maturation.

The protein localises to the nucleus. Functionally, transcription factor. Acts as a transcriptional activator by binding to promoter regions of target genes, such as Rec8, Mxd4 and Ddit4. Plays a role in natural killer (NK) cell maintenance and immunity. May play a role in the process of ciliogenesis in the neural tube and neural tube closure. The chain is DNA-binding protein RFX7 from Mus musculus (Mouse).